Reading from the N-terminus, the 484-residue chain is tRNA sulfurtransferase (484 aa).

Residues 63 to 167 (EAFGERLACI…NDNLYLIDKR (105 aa)) form the THUMP domain. ATP-binding positions include 185–186 (LI), Lys-267, Gly-289, and Gln-298. Cys-346 and Cys-458 are joined by a disulfide. In terms of domain architecture, Rhodanese spans 406-484 (INANEIIIDV…GYTNVKVYRP (79 aa)). Cys-458 functions as the Cysteine persulfide intermediate in the catalytic mechanism.

It belongs to the ThiI family.

It is found in the cytoplasm. It carries out the reaction [ThiI sulfur-carrier protein]-S-sulfanyl-L-cysteine + a uridine in tRNA + 2 reduced [2Fe-2S]-[ferredoxin] + ATP + H(+) = [ThiI sulfur-carrier protein]-L-cysteine + a 4-thiouridine in tRNA + 2 oxidized [2Fe-2S]-[ferredoxin] + AMP + diphosphate. It catalyses the reaction [ThiS sulfur-carrier protein]-C-terminal Gly-Gly-AMP + S-sulfanyl-L-cysteinyl-[cysteine desulfurase] + AH2 = [ThiS sulfur-carrier protein]-C-terminal-Gly-aminoethanethioate + L-cysteinyl-[cysteine desulfurase] + A + AMP + 2 H(+). It participates in cofactor biosynthesis; thiamine diphosphate biosynthesis. Its function is as follows. Catalyzes the ATP-dependent transfer of a sulfur to tRNA to produce 4-thiouridine in position 8 of tRNAs, which functions as a near-UV photosensor. Also catalyzes the transfer of sulfur to the sulfur carrier protein ThiS, forming ThiS-thiocarboxylate. This is a step in the synthesis of thiazole, in the thiamine biosynthesis pathway. The sulfur is donated as persulfide by IscS. This Shewanella halifaxensis (strain HAW-EB4) protein is tRNA sulfurtransferase.